The chain runs to 499 residues: Glucose-6-phosphate isomerase (499 aa).

The Proton donor role is filled by Glu-352. Catalysis depends on residues His-383 and Lys-487.

It belongs to the GPI family.

The protein resides in the cytoplasm. It catalyses the reaction alpha-D-glucose 6-phosphate = beta-D-fructose 6-phosphate. Its pathway is carbohydrate biosynthesis; gluconeogenesis. It functions in the pathway carbohydrate degradation; glycolysis; D-glyceraldehyde 3-phosphate and glycerone phosphate from D-glucose: step 2/4. Functionally, catalyzes the reversible isomerization of glucose-6-phosphate to fructose-6-phosphate. This Legionella pneumophila (strain Lens) protein is Glucose-6-phosphate isomerase.